We begin with the raw amino-acid sequence, 231 residues long: Heptaprenylglyceryl phosphate synthase (231 aa).

Sn-glycerol 1-phosphate is bound at residue Lys-12. Residues Asp-14 and Thr-40 each contribute to the Mg(2+) site. Residues 159-164 (YMEYSG), Gly-189, and 209-210 (GN) contribute to the sn-glycerol 1-phosphate site.

Belongs to the GGGP/HepGP synthase family. Group I subfamily. In terms of assembly, homodimer. Mg(2+) serves as cofactor.

It catalyses the reaction sn-glycerol 1-phosphate + all-trans-heptaprenyl diphosphate = 3-heptaprenyl-sn-glycero-1-phosphate + diphosphate. Its pathway is membrane lipid metabolism; glycerophospholipid metabolism. Functionally, prenyltransferase that catalyzes in vivo the transfer of the heptaprenyl moiety of heptaprenyl pyrophosphate (HepPP; 35 carbon atoms) to the C3 hydroxyl of sn-glycerol-1-phosphate (G1P), producing heptaprenylglyceryl phosphate (HepGP). This reaction is an ether-bond-formation step in the biosynthesis of archaea-type G1P-based membrane lipids found in Bacillales. In Brevibacillus brevis (strain 47 / JCM 6285 / NBRC 100599), this protein is Heptaprenylglyceryl phosphate synthase.